The chain runs to 314 residues: L-lactate dehydrogenase 2 (314 aa).

NAD(+) contacts are provided by residues Val16, Asp37, Lys42, Tyr68, and 82–83; that span reads GL. Substrate is bound by residues Gln85, Arg91, and 123 to 126; that span reads NPVD. NAD(+) contacts are provided by residues 121 to 123 and Ser146; that span reads ATN. 151–154 is a binding site for substrate; it reads DSAR. Beta-D-fructose 1,6-bisphosphate-binding residues include Arg156 and His171. Residue His178 is the Proton acceptor of the active site. The residue at position 223 (Tyr223) is a Phosphotyrosine. Thr232 lines the substrate pocket.

The protein belongs to the LDH/MDH superfamily. LDH family. As to quaternary structure, homotetramer.

The protein localises to the cytoplasm. The enzyme catalyses (S)-lactate + NAD(+) = pyruvate + NADH + H(+). It functions in the pathway fermentation; pyruvate fermentation to lactate; (S)-lactate from pyruvate: step 1/1. Allosterically activated by fructose 1,6-bisphosphate (FBP). Its function is as follows. Catalyzes the conversion of lactate to pyruvate. The protein is L-lactate dehydrogenase 2 of Bacillus anthracis.